The chain runs to 259 residues: Thiazole synthase (259 aa).

Catalysis depends on Lys99, which acts as the Schiff-base intermediate with DXP. 1-deoxy-D-xylulose 5-phosphate-binding positions include Gly160, 186–187 (AG), and 208–209 (NT).

The protein belongs to the ThiG family. Homotetramer. Forms heterodimers with either ThiH or ThiS.

It is found in the cytoplasm. The catalysed reaction is [ThiS sulfur-carrier protein]-C-terminal-Gly-aminoethanethioate + 2-iminoacetate + 1-deoxy-D-xylulose 5-phosphate = [ThiS sulfur-carrier protein]-C-terminal Gly-Gly + 2-[(2R,5Z)-2-carboxy-4-methylthiazol-5(2H)-ylidene]ethyl phosphate + 2 H2O + H(+). The protein operates within cofactor biosynthesis; thiamine diphosphate biosynthesis. In terms of biological role, catalyzes the rearrangement of 1-deoxy-D-xylulose 5-phosphate (DXP) to produce the thiazole phosphate moiety of thiamine. Sulfur is provided by the thiocarboxylate moiety of the carrier protein ThiS. In vitro, sulfur can be provided by H(2)S. In Porphyromonas gingivalis (strain ATCC BAA-308 / W83), this protein is Thiazole synthase.